A 560-amino-acid polypeptide reads, in one-letter code: Nucleoprotein (560 aa).

Residues 54–236 (LRKSKRGDTD…ITKDESALNI (183 aa)) form a binding site for the cap structure m7GTP region. The Mn(2+) site is built by Asp-380 and Glu-382. Residues Glu-390, Cys-497, His-500, and Cys-521 each contribute to the Zn(2+) site. Asp-525 contacts Mn(2+).

Belongs to the arenaviridae nucleocapsid protein family. In terms of assembly, homomultimerizes to form the nucleocapsid. Binds to viral genomic RNA. Interacts with glycoprotein G2. Interacts with protein Z; this interaction probably directs the encapsidated genome to budding sites. Interacts with protein L; this interaction does not interfere with Z-L interaction. Interacts with host IKBKE (via Protein kinase domain); the interaction inhibits IKBKE kinase activity.

Its subcellular location is the virion. It localises to the host cytoplasm. Its function is as follows. Encapsidates the genome, protecting it from nucleases. The encapsidated genomic RNA is termed the nucleocapsid (NC). Serves as template for viral transcription and replication. The increased presence of protein N in host cell does not seem to trigger the switch from transcription to replication as observed in other negative strain RNA viruses. Through the interaction with host IKBKE, strongly inhibits the phosphorylation and nuclear translocation of host IRF3, a protein involved in interferon activation pathway, leading to the inhibition of interferon-beta and IRF3-dependent promoters activation. Also encodes a functional 3'-5' exoribonuclease that degrades preferentially dsRNA substrates and thereby participates in the suppression of interferon induction. The polypeptide is Nucleoprotein (Homo sapiens (Human)).